We begin with the raw amino-acid sequence, 354 residues long: Uroporphyrinogen decarboxylase (354 aa).

Substrate contacts are provided by residues 27-31 (RQAGR), Asp-77, Tyr-154, Thr-209, and His-327.

It belongs to the uroporphyrinogen decarboxylase family. In terms of assembly, homodimer.

It is found in the cytoplasm. It catalyses the reaction uroporphyrinogen III + 4 H(+) = coproporphyrinogen III + 4 CO2. The protein operates within porphyrin-containing compound metabolism; protoporphyrin-IX biosynthesis; coproporphyrinogen-III from 5-aminolevulinate: step 4/4. In terms of biological role, catalyzes the decarboxylation of four acetate groups of uroporphyrinogen-III to yield coproporphyrinogen-III. This is Uroporphyrinogen decarboxylase from Salmonella arizonae (strain ATCC BAA-731 / CDC346-86 / RSK2980).